We begin with the raw amino-acid sequence, 167 residues long: Biotin carboxyl carrier protein of acetyl-CoA carboxylase (167 aa).

Residues 53–91 (SGFSQERPIPTDPKKDTIKETTTENSETSTTTSSGDFIS) are disordered. Residues 64-74 (DPKKDTIKETT) are compositionally biased toward basic and acidic residues. A compositionally biased stretch (low complexity) spans 75–86 (TENSETSTTTSS). The region spanning 87-163 (GDFISSPLVG…QFGSKLFRIA (77 aa)) is the Biotinyl-binding domain. K129 is subject to N6-biotinyllysine.

Homodimer.

It participates in lipid metabolism; fatty acid biosynthesis. This protein is a component of the acetyl coenzyme A carboxylase complex; first, biotin carboxylase catalyzes the carboxylation of the carrier protein and then the transcarboxylase transfers the carboxyl group to form malonyl-CoA. This Chlamydia pneumoniae (Chlamydophila pneumoniae) protein is Biotin carboxyl carrier protein of acetyl-CoA carboxylase (accB).